Consider the following 125-residue polypeptide: Homeobox protein HD-8 (125 aa).

A DNA-binding region (homeobox) is located at residues 30-89 (EPDTRTRKTTFQMMVLKEVFKIAPHPSTLTKADLALMIKLPLKAVQIWFQNERSRKERGG).

The protein localises to the nucleus. The chain is Homeobox protein HD-8 (HD-8) from Encephalitozoon cuniculi (strain GB-M1) (Microsporidian parasite).